The chain runs to 298 residues: Elongation factor Ts (298 aa).

Positions 79–82 (TDFV) are involved in Mg(2+) ion dislocation from EF-Tu.

It belongs to the EF-Ts family.

It is found in the cytoplasm. Its function is as follows. Associates with the EF-Tu.GDP complex and induces the exchange of GDP to GTP. It remains bound to the aminoacyl-tRNA.EF-Tu.GTP complex up to the GTP hydrolysis stage on the ribosome. This is Elongation factor Ts from Cereibacter sphaeroides (strain ATCC 17029 / ATH 2.4.9) (Rhodobacter sphaeroides).